The following is a 117-amino-acid chain: Immunoglobulin kappa variable 1-12 (117 aa).

Residues 1–22 form the signal peptide; the sequence is MDMRVPAQLLGLLLLWFPGSRC. The segment at 23–45 is framework-1; it reads DIQMTQSPSSVSASVGDRVTITC. The Ig-like domain maps to 24–117; it reads IQMTQSPSSV…YYCQQANSFP (94 aa). An intrachain disulfide couples cysteine 45 to cysteine 110. The segment at 46 to 56 is complementarity-determining-1; it reads RASQGISSWLA. Residues 57 to 71 form a framework-2 region; it reads WYQQKPGKAPKLLIY. The complementarity-determining-2 stretch occupies residues 72–78; the sequence is AASSLQS. Residues 79–110 form a framework-3 region; sequence GVPSRFSGSGSGTDFTLTISSLQPEDFATYYC. The tract at residues 111 to 117 is complementarity-determining-3; it reads QQANSFP.

Immunoglobulins are composed of two identical heavy chains and two identical light chains; disulfide-linked.

The protein resides in the secreted. It localises to the cell membrane. Functionally, v region of the variable domain of immunoglobulin light chains that participates in the antigen recognition. Immunoglobulins, also known as antibodies, are membrane-bound or secreted glycoproteins produced by B lymphocytes. In the recognition phase of humoral immunity, the membrane-bound immunoglobulins serve as receptors which, upon binding of a specific antigen, trigger the clonal expansion and differentiation of B lymphocytes into immunoglobulins-secreting plasma cells. Secreted immunoglobulins mediate the effector phase of humoral immunity, which results in the elimination of bound antigens. The antigen binding site is formed by the variable domain of one heavy chain, together with that of its associated light chain. Thus, each immunoglobulin has two antigen binding sites with remarkable affinity for a particular antigen. The variable domains are assembled by a process called V-(D)-J rearrangement and can then be subjected to somatic hypermutations which, after exposure to antigen and selection, allow affinity maturation for a particular antigen. This chain is Immunoglobulin kappa variable 1-12, found in Homo sapiens (Human).